Here is a 332-residue protein sequence, read N- to C-terminus: Sesquiterpene synthase MBR_10393 (332 aa).

2 residues coordinate Mg(2+): D91 and D96. Positions 91–96 match the DDXXXD motif motif; the sequence is DDLFVD. Substrate is bound at residue R184. N230, S234, and E238 together coordinate Mg(2+).

This sequence belongs to the terpene synthase family. Mg(2+) serves as cofactor.

The enzyme catalyses (2E,6E)-farnesyl diphosphate + H2O = (+)-corvol ether B + diphosphate. It catalyses the reaction (2E,6E)-farnesyl diphosphate + H2O = (+)-corvol ether A + diphosphate. Its function is as follows. Terpene synthase that catalyzes the conversion of (2E,6E)-farnesyl diphosphate (FPP) into sesquiterpenes which are important for fungi-environment interactions. Produces a mixture consisting of 8 sesquiterpenes including corvol ethers A and B, as well as traces of epizonarene, gamma-cadinene, delta-cadinene, alpha-cadinene, alpha-cadinol, and an unidentified sesquiterpene. The major product is corvol ether B. The chain is Sesquiterpene synthase MBR_10393 from Metarhizium brunneum (strain ARSEF 3297).